The primary structure comprises 162 residues: MRISKPYLRSTSIQCYLCLLLNSHFLAEAGIHVFIFGCISAGLPKTEANWHDVISDLKRIEDLIKSIHIDATLYTESDAHPNCKVTAMKCFLLELRVISHESRNMDINETVQNLIILANTSLSSKGNVTESGCKECEELEEKNITEFLQSFIHIVQMFINSP.

A signal peptide spans 1-29 (MRISKPYLRSTSIQCYLCLLLNSHFLAEA). Positions 30-48 (GIHVFIFGCISAGLPKTEA) are excised as a propeptide. Intrachain disulfides connect Cys-83-Cys-133 and Cys-90-Cys-136. N-linked (GlcNAc...) asparagine glycosylation is found at Asn-108, Asn-119, Asn-127, and Asn-143.

This sequence belongs to the IL-15/IL-21 family. In terms of tissue distribution, expressed in many tissues including heart, spleen, lung, liver, muscle and kidney (at mRNA level). Expressed in many tissues including heart, spleen, lung, liver, muscle and kidney (at protein level).

It localises to the secreted. Functionally, cytokine that plays a major role in the development of inflammatory and protective immune responses to microbial invaders and parasites by modulating immune cells of both the innate and adaptive immune systems. Stimulates the proliferation of natural killer cells, T-cells and B-cells and promotes the secretion of several cytokines. In monocytes, induces the production of IL8 and monocyte chemotactic protein 1/CCL2, two chemokines that attract neutrophils and monocytes respectively to sites of infection. Unlike most cytokines, which are secreted in soluble form, IL15 is expressed in association with its high affinity IL15RA on the surface of IL15-producing cells and delivers signals to target cells that express IL2RB and IL2RG receptor subunits. Binding to its receptor triggers the phosphorylation of JAK1 and JAK3 and the recruitment and subsequent phosphorylation of signal transducer and activator of transcription-3/STAT3 and STAT5. In mast cells, induces the rapid tyrosine phosphorylation of STAT6 and thereby controls mast cell survival and release of cytokines such as IL4. The polypeptide is Interleukin-15 (IL15) (Oryctolagus cuniculus (Rabbit)).